The chain runs to 128 residues: DNA-directed RNA polymerase subunit omega (128 aa).

Belongs to the RNA polymerase subunit omega family. In terms of assembly, the RNAP catalytic core consists of 2 alpha, 1 beta, 1 beta' and 1 omega subunit. When a sigma factor is associated with the core the holoenzyme is formed, which can initiate transcription.

The enzyme catalyses RNA(n) + a ribonucleoside 5'-triphosphate = RNA(n+1) + diphosphate. Its function is as follows. Promotes RNA polymerase assembly. Latches the N- and C-terminal regions of the beta' subunit thereby facilitating its interaction with the beta and alpha subunits. The sequence is that of DNA-directed RNA polymerase subunit omega from Azorhizobium caulinodans (strain ATCC 43989 / DSM 5975 / JCM 20966 / LMG 6465 / NBRC 14845 / NCIMB 13405 / ORS 571).